Reading from the N-terminus, the 250-residue chain is Kv channel-interacting protein 4 (250 aa).

The KIS stretch occupies residues 2 to 44 (NVRRVESISAQLEEASSTGGFLYAQNSTKRSIKERLMKLLPCS). Phosphoserine occurs at positions 17 and 56. Residues 61–117 (LEMATVRHRPEALELLEAQSKFTKKELQILYRGFKNECPSGVVNEETFKEIYSQFFP) enclose the EF-hand 1; degenerate domain. 3 consecutive EF-hand domains span residues 120-155 (DSTTYAHFLFNAFDTDHNGAVSFEDFIKGLSILLRG), 156-191 (TVQEKLNWAFNLYDINKDGYITKEEMLDIMKAIYDM), and 204-239 (APRQHVETFFQKMDKNKDGVVTIDEFIESCQKDENI). Positions 133, 135, 137, 144, 169, 171, 173, 175, 180, 217, 219, 221, and 228 each coordinate Ca(2+). The interaction with KCND2 stretch occupies residues 237 to 250 (ENIMRSMQLFENVI).

The protein belongs to the recoverin family. As to quaternary structure, component of heteromultimeric potassium channels. Identified in potassium channel complexes containing KCND1, KCND2, KCND3, KCNIP1, KCNIP2, KCNIP3, KCNIP4, DPP6 and DPP10. Interacts with KCND2. Interacts with KCND3. Interacts with the C-terminus of PSEN2 and probably PSEN1.

The protein localises to the cell membrane. It localises to the cytoplasm. The protein resides in the peroxisome. Functionally, regulatory subunit of Kv4/D (Shal)-type voltage-gated rapidly inactivating A-type potassium channels. Modulates KCND2 channel density, inactivation kinetics and rate of recovery from inactivation in a calcium-dependent and isoform-specific manner. Modulates KCND3/Kv4.3 currents. Isoform 4 does not increase KCND2 expression at the cell membrane. Isoform 4 retains KCND3 in the endoplasmic reticulum and negatively regulates its expression at the cell membrane. This chain is Kv channel-interacting protein 4 (KCNIP4), found in Macaca fascicularis (Crab-eating macaque).